A 129-amino-acid chain; its full sequence is Large ribosomal subunit protein bL12c (129 aa).

The protein belongs to the bacterial ribosomal protein bL12 family. In terms of assembly, homodimer. Part of the ribosomal stalk of the 50S ribosomal subunit. Forms a multimeric L10(L12)X complex, where L10 forms an elongated spine to which 2 to 4 L12 dimers bind in a sequential fashion. Binds GTP-bound translation factors.

The protein localises to the plastid. It is found in the chloroplast. In terms of biological role, forms part of the ribosomal stalk which helps the ribosome interact with GTP-bound translation factors. Is thus essential for accurate translation. This is Large ribosomal subunit protein bL12c from Porphyra purpurea (Red seaweed).